We begin with the raw amino-acid sequence, 193 residues long: Xanthine phosphoribosyltransferase (193 aa).

Positions 20 and 27 each coordinate xanthine. Position 128 to 132 (128 to 132 (ANGQA)) interacts with 5-phospho-alpha-D-ribose 1-diphosphate. Position 156 (K156) interacts with xanthine.

Belongs to the purine/pyrimidine phosphoribosyltransferase family. Xpt subfamily. As to quaternary structure, homodimer.

The protein resides in the cytoplasm. It catalyses the reaction XMP + diphosphate = xanthine + 5-phospho-alpha-D-ribose 1-diphosphate. It participates in purine metabolism; XMP biosynthesis via salvage pathway; XMP from xanthine: step 1/1. Its function is as follows. Converts the preformed base xanthine, a product of nucleic acid breakdown, to xanthosine 5'-monophosphate (XMP), so it can be reused for RNA or DNA synthesis. This is Xanthine phosphoribosyltransferase from Streptococcus gordonii (strain Challis / ATCC 35105 / BCRC 15272 / CH1 / DL1 / V288).